A 343-amino-acid chain; its full sequence is Phenylalanine--tRNA ligase alpha subunit (343 aa).

Glutamate 264 is a binding site for Mg(2+).

The protein belongs to the class-II aminoacyl-tRNA synthetase family. Phe-tRNA synthetase alpha subunit type 1 subfamily. Tetramer of two alpha and two beta subunits. Mg(2+) serves as cofactor.

It is found in the cytoplasm. The catalysed reaction is tRNA(Phe) + L-phenylalanine + ATP = L-phenylalanyl-tRNA(Phe) + AMP + diphosphate + H(+). This chain is Phenylalanine--tRNA ligase alpha subunit, found in Aromatoleum aromaticum (strain DSM 19018 / LMG 30748 / EbN1) (Azoarcus sp. (strain EbN1)).